Consider the following 517-residue polypeptide: Succinyl-CoA:3-ketoacid coenzyme A transferase 2, mitochondrial (517 aa).

The N-terminal 39 residues, 1 to 39 (MAALRLLASVLGRGVPAGGSGLALSQGCARCFATSPRLR), are a transit peptide targeting the mitochondrion. Glu-341 (5-glutamyl coenzyme A thioester intermediate) is an active-site residue.

Belongs to the 3-oxoacid CoA-transferase family. Homodimer. In terms of tissue distribution, testis specific.

The protein resides in the mitochondrion. It carries out the reaction a 3-oxo acid + succinyl-CoA = a 3-oxoacyl-CoA + succinate. Its pathway is ketone metabolism; succinyl-CoA degradation; acetoacetyl-CoA from succinyl-CoA: step 1/1. In terms of biological role, key enzyme for ketone body catabolism. Transfers the CoA moiety from succinate to acetoacetate. Formation of the enzyme-CoA intermediate proceeds via an unstable anhydride species formed between the carboxylate groups of the enzyme and substrate. In Homo sapiens (Human), this protein is Succinyl-CoA:3-ketoacid coenzyme A transferase 2, mitochondrial (OXCT2).